The primary structure comprises 145 residues: 3-hydroxyacyl-[acyl-carrier-protein] dehydratase FabZ (145 aa).

H48 is an active-site residue.

The protein belongs to the thioester dehydratase family. FabZ subfamily.

The protein localises to the cytoplasm. The enzyme catalyses a (3R)-hydroxyacyl-[ACP] = a (2E)-enoyl-[ACP] + H2O. Functionally, involved in unsaturated fatty acids biosynthesis. Catalyzes the dehydration of short chain beta-hydroxyacyl-ACPs and long chain saturated and unsaturated beta-hydroxyacyl-ACPs. The sequence is that of 3-hydroxyacyl-[acyl-carrier-protein] dehydratase FabZ from Stutzerimonas stutzeri (strain A1501) (Pseudomonas stutzeri).